Reading from the N-terminus, the 157-residue chain is DNA gyrase inhibitor (157 aa).

This sequence belongs to the DNA gyrase inhibitor family. In terms of assembly, interacts with DNA gyrase.

It localises to the cytoplasm. Its function is as follows. Inhibits the supercoiling activity of DNA gyrase. Acts by inhibiting DNA gyrase at an early step, prior to (or at the step of) binding of DNA by the gyrase. It protects cells against toxins that target DNA gyrase, by inhibiting activity of these toxins and reducing the formation of lethal double-strand breaks in the cell. This Enterobacter lignolyticus (strain SCF1) protein is DNA gyrase inhibitor.